Reading from the N-terminus, the 249-residue chain is Secreted flagellin C (249 aa).

Interacts with FliS.

It is found in the secreted. Functionally, might play a role in virulence. The chain is Secreted flagellin C (flaC) from Campylobacter jejuni subsp. jejuni serotype O:6 (strain 81116 / NCTC 11828).